The primary structure comprises 286 residues: ATP synthase gamma chain (286 aa).

This sequence belongs to the ATPase gamma chain family. F-type ATPases have 2 components, CF(1) - the catalytic core - and CF(0) - the membrane proton channel. CF(1) has five subunits: alpha(3), beta(3), gamma(1), delta(1), epsilon(1). CF(0) has three main subunits: a, b and c.

It localises to the cell inner membrane. In terms of biological role, produces ATP from ADP in the presence of a proton gradient across the membrane. The gamma chain is believed to be important in regulating ATPase activity and the flow of protons through the CF(0) complex. The protein is ATP synthase gamma chain of Shewanella halifaxensis (strain HAW-EB4).